The chain runs to 181 residues: Adenine phosphoribosyltransferase (181 aa).

This sequence belongs to the purine/pyrimidine phosphoribosyltransferase family. In terms of assembly, homodimer.

The protein localises to the cytoplasm. The catalysed reaction is AMP + diphosphate = 5-phospho-alpha-D-ribose 1-diphosphate + adenine. It functions in the pathway purine metabolism; AMP biosynthesis via salvage pathway; AMP from adenine: step 1/1. Functionally, catalyzes a salvage reaction resulting in the formation of AMP, that is energically less costly than de novo synthesis. The polypeptide is Adenine phosphoribosyltransferase (Shewanella woodyi (strain ATCC 51908 / MS32)).